The chain runs to 411 residues: MNRFSKIRQYSTLLQTAEKYSVPTYAKPSVILTKGKGAYLWDSNDNKYIDFSAGIAVTALGHSNPEITKILAEQSSQLMHCSNLFNNEWAPRLQESLVEETLKSGGMKGARKVFLANSGTEANEAALKFARKVGTLSSPDKTEFVNFEKAFHGRTMGALSVTPNPKYQAPFAPLVPGVKTGVYNDPKAADLITEKTCGVIVEPVQGEGGVYKANDEFLQALRNKCDEVGAMLIFDEIQCGLGRTGRLWAHDKVHPDILTMAKALGNGFPIGATMVTEAVADKIAIGDHGTTYGGNPLASRVGHYVLSQVASKEVLDNVKKVSQQIRDAVAEVQEEFPELITEVRGDGLLLGIQFSKDPSKVVAAARENGLLVITAGTNTVRLVPALNIDQEAVTEGLEILKKAIRDNAKDL.

At lysine 262 the chain carries N6-(pyridoxal phosphate)lysine.

Belongs to the class-III pyridoxal-phosphate-dependent aminotransferase family. Pyridoxal 5'-phosphate is required as a cofactor.

It localises to the mitochondrion matrix. The catalysed reaction is N(2)-acetyl-L-ornithine + 2-oxoglutarate = N-acetyl-L-glutamate 5-semialdehyde + L-glutamate. It participates in amino-acid biosynthesis; L-arginine biosynthesis; N(2)-acetyl-L-ornithine from L-glutamate: step 4/4. In Yarrowia lipolytica (strain CLIB 122 / E 150) (Yeast), this protein is Acetylornithine aminotransferase, mitochondrial (ARG8).